The chain runs to 155 residues: Endoribonuclease YbeY (155 aa).

Residues H117, H121, and H127 each coordinate Zn(2+).

This sequence belongs to the endoribonuclease YbeY family. The cofactor is Zn(2+).

It is found in the cytoplasm. Its function is as follows. Single strand-specific metallo-endoribonuclease involved in late-stage 70S ribosome quality control and in maturation of the 3' terminus of the 16S rRNA. The chain is Endoribonuclease YbeY from Dichelobacter nodosus (strain VCS1703A).